The primary structure comprises 289 residues: Bifunctional protein FolD 2 (289 aa).

NADP(+) is bound by residues 162–164 (GRS), serine 187, and isoleucine 228.

It belongs to the tetrahydrofolate dehydrogenase/cyclohydrolase family. As to quaternary structure, homodimer.

The enzyme catalyses (6R)-5,10-methylene-5,6,7,8-tetrahydrofolate + NADP(+) = (6R)-5,10-methenyltetrahydrofolate + NADPH. It carries out the reaction (6R)-5,10-methenyltetrahydrofolate + H2O = (6R)-10-formyltetrahydrofolate + H(+). Its pathway is one-carbon metabolism; tetrahydrofolate interconversion. Functionally, catalyzes the oxidation of 5,10-methylenetetrahydrofolate to 5,10-methenyltetrahydrofolate and then the hydrolysis of 5,10-methenyltetrahydrofolate to 10-formyltetrahydrofolate. This Deinococcus geothermalis (strain DSM 11300 / CIP 105573 / AG-3a) protein is Bifunctional protein FolD 2.